Here is a 359-residue protein sequence, read N- to C-terminus: Pyruvate dehydrogenase E1 component subunit beta, mitochondrial (359 aa).

Residues 1–30 constitute a mitochondrion transit peptide; it reads MAAVSGLVRRPLREVSGLLKRRFHWTAPAA. A Phosphotyrosine modification is found at Tyr67. Glu89 contacts thiamine diphosphate. Residues Ile142, Ala190, Ile191, Asp193, and Asn195 each coordinate K(+). Lys354 is modified (N6-acetyllysine).

As to quaternary structure, heterotetramer of two PDHA1 and two PDHB subunits. The heterotetramer interacts with DLAT, and is part of the multimeric pyruvate dehydrogenase complex that contains multiple copies of pyruvate dehydrogenase (E1), dihydrolipoamide acetyltransferase (DLAT, E2) and lipoamide dehydrogenase (DLD, E3). These subunits are bound to an inner core composed of about 48 DLAT and 12 PDHX molecules. Interacts with DLAT. It depends on thiamine diphosphate as a cofactor.

It is found in the mitochondrion matrix. The catalysed reaction is N(6)-[(R)-lipoyl]-L-lysyl-[protein] + pyruvate + H(+) = N(6)-[(R)-S(8)-acetyldihydrolipoyl]-L-lysyl-[protein] + CO2. Functionally, the pyruvate dehydrogenase complex catalyzes the overall conversion of pyruvate to acetyl-CoA and CO(2), and thereby links the glycolytic pathway to the tricarboxylic cycle. The polypeptide is Pyruvate dehydrogenase E1 component subunit beta, mitochondrial (PDHB) (Homo sapiens (Human)).